Consider the following 92-residue polypeptide: Small ribosomal subunit protein uS19 (92 aa).

This sequence belongs to the universal ribosomal protein uS19 family.

Protein S19 forms a complex with S13 that binds strongly to the 16S ribosomal RNA. The polypeptide is Small ribosomal subunit protein uS19 (Limosilactobacillus reuteri (strain DSM 20016) (Lactobacillus reuteri)).